The following is a 464-amino-acid chain: Cysteine--tRNA ligase (464 aa).

Cys-32 lines the Zn(2+) pocket. Residues 34–44 (VTVYDDCHIGH) carry the 'HIGH' region motif. Zn(2+) contacts are provided by Cys-213, His-238, and Glu-242. The 'KMSKS' region motif lies at 270 to 274 (KMSKS). Lys-273 contributes to the ATP binding site.

Belongs to the class-I aminoacyl-tRNA synthetase family. Monomer. Zn(2+) serves as cofactor.

The protein resides in the cytoplasm. It carries out the reaction tRNA(Cys) + L-cysteine + ATP = L-cysteinyl-tRNA(Cys) + AMP + diphosphate. The chain is Cysteine--tRNA ligase from Francisella tularensis subsp. holarctica (strain LVS).